We begin with the raw amino-acid sequence, 249 residues long: Proteasome subunit alpha type-3 (249 aa).

It belongs to the peptidase T1A family. As to quaternary structure, the 26S proteasome consists of a 20S proteasome core and two 19S regulatory subunits. The 20S proteasome core is composed of 28 subunits that are arranged in four stacked rings, resulting in a barrel-shaped structure. The two end rings are each formed by seven alpha subunits, and the two central rings are each formed by seven beta subunits. The catalytic chamber with the active sites is on the inside of the barrel.

Its subcellular location is the cytoplasm. It is found in the nucleus. Functionally, the proteasome is a multicatalytic proteinase complex which is characterized by its ability to cleave peptides with Arg, Phe, Tyr, Leu, and Glu adjacent to the leaving group at neutral or slightly basic pH. The proteasome has an ATP-dependent proteolytic activity. This is Proteasome subunit alpha type-3 (PAG1) from Oryza sativa subsp. japonica (Rice).